The following is a 914-amino-acid chain: Protein translocase subunit SecA (914 aa).

ATP contacts are provided by residues Q86, G104–T108, and D512. Zn(2+) contacts are provided by C898, C900, C909, and H910.

Belongs to the SecA family. Monomer and homodimer. Part of the essential Sec protein translocation apparatus which comprises SecA, SecYEG and auxiliary proteins SecDF-YajC and YidC. The cofactor is Zn(2+).

The protein localises to the cell inner membrane. It localises to the cytoplasm. The catalysed reaction is ATP + H2O + cellular proteinSide 1 = ADP + phosphate + cellular proteinSide 2.. Functionally, part of the Sec protein translocase complex. Interacts with the SecYEG preprotein conducting channel. Has a central role in coupling the hydrolysis of ATP to the transfer of proteins into and across the cell membrane, serving both as a receptor for the preprotein-SecB complex and as an ATP-driven molecular motor driving the stepwise translocation of polypeptide chains across the membrane. The protein is Protein translocase subunit SecA of Bordetella petrii (strain ATCC BAA-461 / DSM 12804 / CCUG 43448).